Reading from the N-terminus, the 341-residue chain is Retinol dehydrogenase 10 (341 aa).

The helical; Signal-anchor transmembrane segment at 3–23 (IVVEFFLVTFKVLWAFVLAAA) threads the bilayer. NADP(+) is bound at residue 40–64 (LITGAGSGLGRLFALEFARRRALLV). Serine 197 is a substrate binding site. Catalysis depends on tyrosine 210, which acts as the Proton acceptor.

It belongs to the short-chain dehydrogenases/reductases (SDR) family. Detected in retina, entire eyecups and in liver (at protein level).

It localises to the microsome membrane. It is found in the endoplasmic reticulum membrane. It carries out the reaction all-trans-retinol + NADP(+) = all-trans-retinal + NADPH + H(+). Its pathway is cofactor metabolism; retinol metabolism. In terms of biological role, retinol dehydrogenase with a clear preference for NADP. Converts all-trans-retinol to all-trans-retinal. This chain is Retinol dehydrogenase 10 (Rdh10), found in Rattus norvegicus (Rat).